A 360-amino-acid chain; its full sequence is UDP-N-acetylglucosamine--N-acetylmuramyl-(pentapeptide) pyrophosphoryl-undecaprenol N-acetylglucosamine transferase (360 aa).

Residues 15 to 17, asparagine 127, arginine 163, serine 191, isoleucine 249, 268 to 273, and glutamine 293 each bind UDP-N-acetyl-alpha-D-glucosamine; these read TGG and ALTVSE.

This sequence belongs to the glycosyltransferase 28 family. MurG subfamily.

The protein resides in the cell inner membrane. It catalyses the reaction di-trans,octa-cis-undecaprenyl diphospho-N-acetyl-alpha-D-muramoyl-L-alanyl-D-glutamyl-meso-2,6-diaminopimeloyl-D-alanyl-D-alanine + UDP-N-acetyl-alpha-D-glucosamine = di-trans,octa-cis-undecaprenyl diphospho-[N-acetyl-alpha-D-glucosaminyl-(1-&gt;4)]-N-acetyl-alpha-D-muramoyl-L-alanyl-D-glutamyl-meso-2,6-diaminopimeloyl-D-alanyl-D-alanine + UDP + H(+). Its pathway is cell wall biogenesis; peptidoglycan biosynthesis. Functionally, cell wall formation. Catalyzes the transfer of a GlcNAc subunit on undecaprenyl-pyrophosphoryl-MurNAc-pentapeptide (lipid intermediate I) to form undecaprenyl-pyrophosphoryl-MurNAc-(pentapeptide)GlcNAc (lipid intermediate II). In Proteus mirabilis (strain HI4320), this protein is UDP-N-acetylglucosamine--N-acetylmuramyl-(pentapeptide) pyrophosphoryl-undecaprenol N-acetylglucosamine transferase.